Reading from the N-terminus, the 166-residue chain is NAD(P)H-quinone oxidoreductase subunit I, chloroplastic (166 aa).

2 4Fe-4S ferredoxin-type domains span residues 55-84 (GRIH…VDWK) and 95-124 (LNYS…MTEE). Positions 64, 67, 70, 74, 104, 107, 110, and 114 each coordinate [4Fe-4S] cluster.

Belongs to the complex I 23 kDa subunit family. As to quaternary structure, NDH is composed of at least 16 different subunits, 5 of which are encoded in the nucleus. Requires [4Fe-4S] cluster as cofactor.

The protein localises to the plastid. It is found in the chloroplast thylakoid membrane. The enzyme catalyses a plastoquinone + NADH + (n+1) H(+)(in) = a plastoquinol + NAD(+) + n H(+)(out). It carries out the reaction a plastoquinone + NADPH + (n+1) H(+)(in) = a plastoquinol + NADP(+) + n H(+)(out). NDH shuttles electrons from NAD(P)H:plastoquinone, via FMN and iron-sulfur (Fe-S) centers, to quinones in the photosynthetic chain and possibly in a chloroplast respiratory chain. The immediate electron acceptor for the enzyme in this species is believed to be plastoquinone. Couples the redox reaction to proton translocation, and thus conserves the redox energy in a proton gradient. The protein is NAD(P)H-quinone oxidoreductase subunit I, chloroplastic of Oblivia mikanioides (Salmea mikanioides).